Consider the following 348-residue polypeptide: Holliday junction branch migration complex subunit RuvB (348 aa).

Positions 4-184 are large ATPase domain (RuvB-L); that stretch reads ADRLIAASGR…FGIVQRLEFY (181 aa). ATP is bound by residues Ile23, Arg24, Gly65, Lys68, Thr69, Thr70, 131–133, Arg174, Tyr184, and Arg221; that span reads EDF. A Mg(2+)-binding site is contributed by Thr69. Positions 185–255 are small ATPAse domain (RuvB-S); that stretch reads NDKDLSTIVS…VADMALNLLD (71 aa). The interval 258–348 is head domain (RuvB-H); that stretch reads ERGFDHSDRR…GGDFSEPGDE (91 aa). DNA-binding residues include Arg294, Arg313, and Arg318.

This sequence belongs to the RuvB family. Homohexamer. Forms an RuvA(8)-RuvB(12)-Holliday junction (HJ) complex. HJ DNA is sandwiched between 2 RuvA tetramers; dsDNA enters through RuvA and exits via RuvB. An RuvB hexamer assembles on each DNA strand where it exits the tetramer. Each RuvB hexamer is contacted by two RuvA subunits (via domain III) on 2 adjacent RuvB subunits; this complex drives branch migration. In the full resolvosome a probable DNA-RuvA(4)-RuvB(12)-RuvC(2) complex forms which resolves the HJ.

It localises to the cytoplasm. It carries out the reaction ATP + H2O = ADP + phosphate + H(+). In terms of biological role, the RuvA-RuvB-RuvC complex processes Holliday junction (HJ) DNA during genetic recombination and DNA repair, while the RuvA-RuvB complex plays an important role in the rescue of blocked DNA replication forks via replication fork reversal (RFR). RuvA specifically binds to HJ cruciform DNA, conferring on it an open structure. The RuvB hexamer acts as an ATP-dependent pump, pulling dsDNA into and through the RuvAB complex. RuvB forms 2 homohexamers on either side of HJ DNA bound by 1 or 2 RuvA tetramers; 4 subunits per hexamer contact DNA at a time. Coordinated motions by a converter formed by DNA-disengaged RuvB subunits stimulates ATP hydrolysis and nucleotide exchange. Immobilization of the converter enables RuvB to convert the ATP-contained energy into a lever motion, pulling 2 nucleotides of DNA out of the RuvA tetramer per ATP hydrolyzed, thus driving DNA branch migration. The RuvB motors rotate together with the DNA substrate, which together with the progressing nucleotide cycle form the mechanistic basis for DNA recombination by continuous HJ branch migration. Branch migration allows RuvC to scan DNA until it finds its consensus sequence, where it cleaves and resolves cruciform DNA. This Pseudomonas putida (strain ATCC 47054 / DSM 6125 / CFBP 8728 / NCIMB 11950 / KT2440) protein is Holliday junction branch migration complex subunit RuvB.